The chain runs to 99 residues: Small ribosomal subunit protein bS20 (99 aa).

Belongs to the bacterial ribosomal protein bS20 family.

Its function is as follows. Binds directly to 16S ribosomal RNA. The protein is Small ribosomal subunit protein bS20 of Cyanothece sp. (strain PCC 7425 / ATCC 29141).